Here is a 330-residue protein sequence, read N- to C-terminus: tRNA-modifying protein YgfZ (330 aa).

Folate is bound by residues W28 and W190.

Belongs to the tRNA-modifying YgfZ family.

The protein localises to the cytoplasm. Functionally, folate-binding protein involved in regulating the level of ATP-DnaA and in the modification of some tRNAs. It is probably a key factor in regulatory networks that act via tRNA modification, such as initiation of chromosomal replication. This Yersinia pseudotuberculosis serotype IB (strain PB1/+) protein is tRNA-modifying protein YgfZ.